A 242-amino-acid chain; its full sequence is Small ribosomal subunit protein uS2 (242 aa).

The protein belongs to the universal ribosomal protein uS2 family.

This Shewanella woodyi (strain ATCC 51908 / MS32) protein is Small ribosomal subunit protein uS2.